Consider the following 425-residue polypeptide: Enolase (425 aa).

Gln163 contributes to the (2R)-2-phosphoglycerate binding site. Glu205 (proton donor) is an active-site residue. The Mg(2+) site is built by Asp242, Glu285, and Asp312. Positions 337, 366, 367, and 388 each coordinate (2R)-2-phosphoglycerate. Lys337 serves as the catalytic Proton acceptor.

Belongs to the enolase family. Mg(2+) serves as cofactor.

The protein resides in the cytoplasm. Its subcellular location is the secreted. The protein localises to the cell surface. The catalysed reaction is (2R)-2-phosphoglycerate = phosphoenolpyruvate + H2O. It participates in carbohydrate degradation; glycolysis; pyruvate from D-glyceraldehyde 3-phosphate: step 4/5. Catalyzes the reversible conversion of 2-phosphoglycerate (2-PG) into phosphoenolpyruvate (PEP). It is essential for the degradation of carbohydrates via glycolysis. The polypeptide is Enolase (Cereibacter sphaeroides (strain ATCC 17025 / ATH 2.4.3) (Rhodobacter sphaeroides)).